The sequence spans 199 residues: NAD(P)H dehydrogenase (quinone) (199 aa).

Residues valine 4–isoleucine 190 enclose the Flavodoxin-like domain. Residues serine 10–isoleucine 15 and threonine 78–phenylalanine 80 contribute to the FMN site. Position 12 (tyrosine 12) interacts with NAD(+). Tryptophan 98 is a substrate binding site. Residues serine 113–glycine 119 and histidine 134 contribute to the FMN site.

Belongs to the WrbA family. It depends on FMN as a cofactor.

It catalyses the reaction a quinone + NADH + H(+) = a quinol + NAD(+). The catalysed reaction is a quinone + NADPH + H(+) = a quinol + NADP(+). The sequence is that of NAD(P)H dehydrogenase (quinone) from Rhodopseudomonas palustris (strain HaA2).